The primary structure comprises 325 residues: Elongation factor P--(R)-beta-lysine ligase (325 aa).

76 to 78 (SPE) serves as a coordination point for substrate. Residues 100 to 102 (RNE) and N109 each bind ATP. Residue Y118 coordinates substrate. An ATP-binding site is contributed by 244-245 (EL). E251 contributes to the substrate binding site. Residue G300 coordinates ATP.

The protein belongs to the class-II aminoacyl-tRNA synthetase family. EpmA subfamily. As to quaternary structure, homodimer.

The catalysed reaction is D-beta-lysine + L-lysyl-[protein] + ATP = N(6)-((3R)-3,6-diaminohexanoyl)-L-lysyl-[protein] + AMP + diphosphate + H(+). In terms of biological role, with EpmB is involved in the beta-lysylation step of the post-translational modification of translation elongation factor P (EF-P). Catalyzes the ATP-dependent activation of (R)-beta-lysine produced by EpmB, forming a lysyl-adenylate, from which the beta-lysyl moiety is then transferred to the epsilon-amino group of a conserved specific lysine residue in EF-P. The polypeptide is Elongation factor P--(R)-beta-lysine ligase (Klebsiella pneumoniae (strain 342)).